The following is a 339-amino-acid chain: Cyclin-Y-like protein 1 (339 aa).

One can recognise a Cyclin N-terminal domain in the interval 181 to 263 (QLTAECAIVT…FLELLQFNIN (83 aa)).

Belongs to the cyclin family. Cyclin Y subfamily.

It localises to the cell membrane. Key regulator of Wnt signaling implicated in various biological processes such as embryonic neurogenesis. The chain is Cyclin-Y-like protein 1 (ccnyl1) from Danio rerio (Zebrafish).